We begin with the raw amino-acid sequence, 130 residues long: Ribonuclease P protein component (130 aa).

The protein belongs to the RnpA family. In terms of assembly, consists of a catalytic RNA component (M1 or rnpB) and a protein subunit.

It carries out the reaction Endonucleolytic cleavage of RNA, removing 5'-extranucleotides from tRNA precursor.. Functionally, RNaseP catalyzes the removal of the 5'-leader sequence from pre-tRNA to produce the mature 5'-terminus. It can also cleave other RNA substrates such as 4.5S RNA. The protein component plays an auxiliary but essential role in vivo by binding to the 5'-leader sequence and broadening the substrate specificity of the ribozyme. This Azotobacter vinelandii (strain DJ / ATCC BAA-1303) protein is Ribonuclease P protein component.